The sequence spans 106 residues: Small ribosomal subunit protein uS17 (106 aa).

This sequence belongs to the universal ribosomal protein uS17 family. As to quaternary structure, part of the 30S ribosomal subunit.

One of the primary rRNA binding proteins, it binds specifically to the 5'-end of 16S ribosomal RNA. The protein is Small ribosomal subunit protein uS17 of Picrophilus torridus (strain ATCC 700027 / DSM 9790 / JCM 10055 / NBRC 100828 / KAW 2/3).